The sequence spans 516 residues: Maturase K (516 aa).

This sequence belongs to the intron maturase 2 family. MatK subfamily.

The protein localises to the plastid. It localises to the chloroplast. Usually encoded in the trnK tRNA gene intron. Probably assists in splicing its own and other chloroplast group II introns. This chain is Maturase K, found in Colchicum speciosum (Giant meadow saffron).